Here is a 342-residue protein sequence, read N- to C-terminus: Farnesyl pyrophosphate synthase 2 (342 aa).

Lysine 47, arginine 50, and glutamine 86 together coordinate isopentenyl diphosphate. Residues aspartate 93 and aspartate 97 each contribute to the Mg(2+) site. A dimethylallyl diphosphate-binding site is contributed by arginine 102. Residue arginine 103 participates in isopentenyl diphosphate binding. Lysine 190, threonine 191, glutamine 229, lysine 246, and lysine 255 together coordinate dimethylallyl diphosphate.

It belongs to the FPP/GGPP synthase family. Mg(2+) serves as cofactor.

It is found in the cytoplasm. It catalyses the reaction isopentenyl diphosphate + dimethylallyl diphosphate = (2E)-geranyl diphosphate + diphosphate. The catalysed reaction is isopentenyl diphosphate + (2E)-geranyl diphosphate = (2E,6E)-farnesyl diphosphate + diphosphate. It functions in the pathway isoprenoid biosynthesis; farnesyl diphosphate biosynthesis; farnesyl diphosphate from geranyl diphosphate and isopentenyl diphosphate: step 1/1. It participates in isoprenoid biosynthesis; geranyl diphosphate biosynthesis; geranyl diphosphate from dimethylallyl diphosphate and isopentenyl diphosphate: step 1/1. In terms of biological role, catalyzes the sequential condensation of isopentenyl pyrophosphate with the allylic pyrophosphates, dimethylallyl pyrophosphate, and then with the resultant geranylpyrophosphate to the ultimate product farnesyl pyrophosphate. This chain is Farnesyl pyrophosphate synthase 2 (FPS2), found in Lupinus albus (White lupine).